The following is a 627-amino-acid chain: Phosphomethylpyrimidine synthase (627 aa).

Over residues 1–21 (MSAQQQKNLSESAQVDQQSVQ) the composition is skewed to polar residues. The interval 1–32 (MSAQQQKNLSESAQVDQQSVQPFPRSQKVYVQ) is disordered. Substrate contacts are provided by residues Asn231, Met260, Tyr289, His325, 345-347 (SRG), 386-389 (DGLR), and Glu425. Residue His429 coordinates Zn(2+). Tyr452 is a binding site for substrate. His493 is a Zn(2+) binding site. Positions 573, 576, and 581 each coordinate [4Fe-4S] cluster.

This sequence belongs to the ThiC family. Homodimer. [4Fe-4S] cluster serves as cofactor.

The catalysed reaction is 5-amino-1-(5-phospho-beta-D-ribosyl)imidazole + S-adenosyl-L-methionine = 4-amino-2-methyl-5-(phosphooxymethyl)pyrimidine + CO + 5'-deoxyadenosine + formate + L-methionine + 3 H(+). It participates in cofactor biosynthesis; thiamine diphosphate biosynthesis. In terms of biological role, catalyzes the synthesis of the hydroxymethylpyrimidine phosphate (HMP-P) moiety of thiamine from aminoimidazole ribotide (AIR) in a radical S-adenosyl-L-methionine (SAM)-dependent reaction. The polypeptide is Phosphomethylpyrimidine synthase (Ectopseudomonas mendocina (strain ymp) (Pseudomonas mendocina)).